We begin with the raw amino-acid sequence, 87 residues long: Small ribosomal subunit protein bS20 (87 aa).

Positions 1-27 (MANIKSAKKRALQSERRRQHNASRRSM) are enriched in basic residues. Residues 1–31 (MANIKSAKKRALQSERRRQHNASRRSMTRTS) are disordered.

The protein belongs to the bacterial ribosomal protein bS20 family.

Binds directly to 16S ribosomal RNA. The sequence is that of Small ribosomal subunit protein bS20 from Pseudoalteromonas atlantica (strain T6c / ATCC BAA-1087).